Here is a 418-residue protein sequence, read N- to C-terminus: Coenzyme A biosynthesis bifunctional protein CoaBC (418 aa).

Residues 1 to 195 (MVDHKRIPKQ…ALPYDLAGRK (195 aa)) form a phosphopantothenoylcysteine decarboxylase region. The tract at residues 196-418 (LLVTAGGTRE…IVTFLAGCSS (223 aa)) is phosphopantothenate--cysteine ligase. CTP-binding residues include D285, K295, F336, K354, and K358.

It in the N-terminal section; belongs to the HFCD (homo-oligomeric flavin containing Cys decarboxylase) superfamily. The protein in the C-terminal section; belongs to the PPC synthetase family. It depends on Mg(2+) as a cofactor. FMN is required as a cofactor.

It catalyses the reaction N-[(R)-4-phosphopantothenoyl]-L-cysteine + H(+) = (R)-4'-phosphopantetheine + CO2. The enzyme catalyses (R)-4'-phosphopantothenate + L-cysteine + CTP = N-[(R)-4-phosphopantothenoyl]-L-cysteine + CMP + diphosphate + H(+). Its pathway is cofactor biosynthesis; coenzyme A biosynthesis; CoA from (R)-pantothenate: step 2/5. The protein operates within cofactor biosynthesis; coenzyme A biosynthesis; CoA from (R)-pantothenate: step 3/5. Functionally, catalyzes two sequential steps in the biosynthesis of coenzyme A. In the first step cysteine is conjugated to 4'-phosphopantothenate to form 4-phosphopantothenoylcysteine. In the second step the latter compound is decarboxylated to form 4'-phosphopantotheine. The chain is Coenzyme A biosynthesis bifunctional protein CoaBC from Mycobacterium bovis (strain ATCC BAA-935 / AF2122/97).